The primary structure comprises 72 residues: Antitoxin VapB11 (72 aa).

Its function is as follows. Antitoxin component of a type II toxin-antitoxin (TA) system. The sequence is that of Antitoxin VapB11 (vapB11) from Mycobacterium tuberculosis (strain CDC 1551 / Oshkosh).